Consider the following 306-residue polypeptide: Ribonuclease Z (306 aa).

Residues His61, His63, Asp65, His66, His137, Asp207, and His263 each contribute to the Zn(2+) site. Catalysis depends on Asp65, which acts as the Proton acceptor.

The protein belongs to the RNase Z family. As to quaternary structure, homodimer. Zn(2+) is required as a cofactor.

The catalysed reaction is Endonucleolytic cleavage of RNA, removing extra 3' nucleotides from tRNA precursor, generating 3' termini of tRNAs. A 3'-hydroxy group is left at the tRNA terminus and a 5'-phosphoryl group is left at the trailer molecule.. Functionally, zinc phosphodiesterase, which displays some tRNA 3'-processing endonuclease activity. Probably involved in tRNA maturation, by removing a 3'-trailer from precursor tRNA. The polypeptide is Ribonuclease Z (Thermococcus sibiricus (strain DSM 12597 / MM 739)).